Here is a 307-residue protein sequence, read N- to C-terminus: 1-phosphofructokinase (307 aa).

ATP is bound by residues 217 to 222 (SMGSDG) and 249 to 250 (GD). The active-site Proton acceptor is the Asp-250.

This sequence belongs to the carbohydrate kinase PfkB family.

It carries out the reaction beta-D-fructose 1-phosphate + ATP = beta-D-fructose 1,6-bisphosphate + ADP + H(+). Functionally, catalyzes the ATP-dependent phosphorylation of fructose-l-phosphate to fructose-l,6-bisphosphate. The polypeptide is 1-phosphofructokinase (fruK) (Borreliella burgdorferi (strain ATCC 35210 / DSM 4680 / CIP 102532 / B31) (Borrelia burgdorferi)).